Here is a 2346-residue protein sequence, read N- to C-terminus: Acetyl-CoA carboxylase 1 (2346 aa).

The residue at position 1 (Met-1) is an N-acetylmethionine. A phosphoserine mark is found at Ser-5, Ser-23, Ser-25, Ser-29, Ser-34, Ser-48, Ser-50, and Ser-53. The residue at position 58 (Thr-58) is a Phosphothreonine. Phosphoserine occurs at positions 78 and 80. The Biotin carboxylation domain occupies 117–618; it reads VIEKVLIANN…DTGWLDRLIA (502 aa). Positions 275-466 constitute an ATP-grasp domain; sequence SKRILNVPQE…LPAAQLQIAM (192 aa). Residue 315–320 coordinates ATP; that stretch reads GGGGKG. Mg(2+)-binding residues include Glu-424, Glu-437, and Asn-439. 3 residues coordinate Mn(2+): Glu-424, Glu-437, and Asn-439. The active site involves Arg-441. At Ser-488 the chain carries Phosphoserine. Thr-610 carries the post-translational modification Phosphothreonine. One can recognise a Biotinyl-binding domain in the interval 745-819; sequence FEKENDPSVM…DPGCVLAKMQ (75 aa). An N6-biotinyllysine modification is found at Lys-786. 4 positions are modified to phosphoserine: Ser-835, Ser-1201, Ser-1216, and Ser-1218. Thr-1227 bears the Phosphothreonine mark. A phosphoserine mark is found at Ser-1259, Ser-1263, and Ser-1273. N6-acetyllysine is present on Lys-1334. The CoA carboxyltransferase N-terminal domain occupies 1576-1914; sequence PYVTKDLLQS…SVHSSVPLLN (339 aa). The segment at 1576–2234 is carboxyltransferase; that stretch reads PYVTKDLLQS…EDLVKKKIHN (659 aa). CoA-binding residues include Arg-1823, Lys-2127, and Arg-2129. Residues 1918–2234 form the CoA carboxyltransferase C-terminal domain; that stretch reads PIDRIIEFVP…EDLVKKKIHN (317 aa). Thr-2153 is subject to Phosphothreonine.

Monomer, homodimer, and homotetramer. Can form filamentous polymers. Interacts in its inactive phosphorylated form with the BRCT domains of BRCA1 which prevents ACACA dephosphorylation and inhibits lipid synthesis. Interacts with MID1IP1; interaction with MID1IP1 promotes oligomerization and increases its activity. Mg(2+) is required as a cofactor. It depends on Mn(2+) as a cofactor. Requires biotin as cofactor. Post-translationally, phosphorylation on Ser-1263 is required for interaction with BRCA1. Phosphorylation at Ser-80 by AMPK inactivates enzyme activity. In terms of processing, the biotin cofactor is covalently attached to the central biotinyl-binding domain and is required for the catalytic activity. As to expression, expressed in brain, placenta, skeletal muscle, renal, pancreatic and adipose tissues; expressed at low level in pulmonary tissue; not detected in the liver.

The protein localises to the cytoplasm. It localises to the cytosol. The enzyme catalyses hydrogencarbonate + acetyl-CoA + ATP = malonyl-CoA + ADP + phosphate + H(+). It functions in the pathway lipid metabolism; malonyl-CoA biosynthesis; malonyl-CoA from acetyl-CoA: step 1/1. Its activity is regulated as follows. Inhibited by phosphorylation. Citrate promotes oligomerization of the protein into filaments that correspond to the most active form of the carboxylase. Inhibited by palmitoyl-CoA. Functionally, cytosolic enzyme that catalyzes the carboxylation of acetyl-CoA to malonyl-CoA, the first and rate-limiting step of de novo fatty acid biosynthesis. This is a 2 steps reaction starting with the ATP-dependent carboxylation of the biotin carried by the biotin carboxyl carrier (BCC) domain followed by the transfer of the carboxyl group from carboxylated biotin to acetyl-CoA. This Homo sapiens (Human) protein is Acetyl-CoA carboxylase 1.